Here is a 471-residue protein sequence, read N- to C-terminus: UDP-N-acetylmuramate--L-alanine ligase (471 aa).

114-120 is a binding site for ATP; the sequence is GTHGKTT.

The protein belongs to the MurCDEF family.

The protein localises to the cytoplasm. The enzyme catalyses UDP-N-acetyl-alpha-D-muramate + L-alanine + ATP = UDP-N-acetyl-alpha-D-muramoyl-L-alanine + ADP + phosphate + H(+). The protein operates within cell wall biogenesis; peptidoglycan biosynthesis. In terms of biological role, cell wall formation. This chain is UDP-N-acetylmuramate--L-alanine ligase, found in Rhizobium etli (strain ATCC 51251 / DSM 11541 / JCM 21823 / NBRC 15573 / CFN 42).